The following is a 272-amino-acid chain: Undecaprenyl-diphosphatase (272 aa).

A run of 7 helical transmembrane segments spans residues 6-26 (SLLIAFILGVVEGLTEFLPVS), 45-65 (AKTFEVIIQLGSILAVVVMFW), 92-112 (THILLAMIPAVVLGLVFHDVI), 115-135 (LFYPQNVMYALVVGGFLLLAA), 189-209 (YAASEFSFILAVPMMMGATVL), 225-245 (MFAVGFVTAFLVALIAIKTFL), and 251-271 (ISFVPFAIYRFIVAGVVYMVF).

It belongs to the UppP family.

The protein resides in the cell inner membrane. It carries out the reaction di-trans,octa-cis-undecaprenyl diphosphate + H2O = di-trans,octa-cis-undecaprenyl phosphate + phosphate + H(+). Functionally, catalyzes the dephosphorylation of undecaprenyl diphosphate (UPP). Confers resistance to bacitracin. This is Undecaprenyl-diphosphatase from Pectobacterium carotovorum subsp. carotovorum (strain PC1).